Reading from the N-terminus, the 856-residue chain is MTLSAAPLQHWRQTLAEKRQQLADAYRADRDAPAFLRRYSQAVDQTLAALWREQGLDGQAALAAVGGYGRGQLFPCSDVDILILLPDPTPAEINDKVSHFIGLMWDIGLEIGHSVRTLDECLREAAGDITIETNLLENRLVAGPAEPWRELMRRLEAQRDPLAFFEGKTLEQQQRHTRHFGVSNNLEPNLKESPGGLRDLHTILWISKAAGLGDNWDSLVRRGILTLAEARLIKHSEEQLQKLRVDLHLLARRREDRLIFDLQQQVAQAWGLADTPAKRASEQLMQLYFRAAKTVNQLNGILLPNLRGRIYCQVPRVTQHISEYFHAVNGMLGIREVNVFDKHPHAILEAFLTLQRHPELSGFAPRMLRALWHGRSQINDRFRSDPRNRATFMQIFREPSGLTRTLRRMNLYGILGQYLPNFGQIVGQMQHDLFHVYTVDEHILMVVRNLRRFAISAYNHEYPFLSRLINDFERPEVLYLAGLFHDIAKGRGGDHSQLGIADADAFCRDHGLAEEDCQLVAWLVGQHLTMSSIAQKQDIYDPETVQRFAELVRTPRRLAALYLLTVADIRGTSPKVWNTWKAKLLEDLYHATLRVLSRGGEIDLASELEARKNQARAQLRLHAIPDAAEAGLWAQLDTVYFLRHEAKEIAWHARVLNRQLSPDTPQVRARLADDHEGLQVLIYSPDKPELFARACAFFGRTNYSIADAKVYTTRHGYALDTFHVFVPEHHDGDYRDMINFIEFELAAALATDQPLQLPPQGRISRHLKHFPITPQVSIRPDDKDSDFILSIVAGDRPGLLARIAKVLADYRLNVRSAKIMTLGGRAEDSFQVSGAALKDDKTALALEAALITALRI.

The segment at 1–320 (MTLSAAPLQH…YCQVPRVTQH (320 aa)) is uridylyltransferase. The interval 321 to 678 (ISEYFHAVNG…ARLADDHEGL (358 aa)) is uridylyl-removing. In terms of domain architecture, HD spans 439-561 (VDEHILMVVR…VRTPRRLAAL (123 aa)). ACT domains lie at 679-760 (QVLI…LPPQ) and 788-856 (ILSI…ALRI).

Belongs to the GlnD family. Mg(2+) serves as cofactor.

It catalyses the reaction [protein-PII]-L-tyrosine + UTP = [protein-PII]-uridylyl-L-tyrosine + diphosphate. The enzyme catalyses [protein-PII]-uridylyl-L-tyrosine + H2O = [protein-PII]-L-tyrosine + UMP + H(+). Uridylyltransferase (UTase) activity is inhibited by glutamine, while glutamine activates uridylyl-removing (UR) activity. Functionally, modifies, by uridylylation and deuridylylation, the PII regulatory proteins (GlnB and homologs), in response to the nitrogen status of the cell that GlnD senses through the glutamine level. Under low glutamine levels, catalyzes the conversion of the PII proteins and UTP to PII-UMP and PPi, while under higher glutamine levels, GlnD hydrolyzes PII-UMP to PII and UMP (deuridylylation). Thus, controls uridylylation state and activity of the PII proteins, and plays an important role in the regulation of nitrogen assimilation and metabolism. The chain is Bifunctional uridylyltransferase/uridylyl-removing enzyme from Chromobacterium violaceum (strain ATCC 12472 / DSM 30191 / JCM 1249 / CCUG 213 / NBRC 12614 / NCIMB 9131 / NCTC 9757 / MK).